A 112-amino-acid chain; its full sequence is Protein GAST1 (112 aa).

A signal peptide spans 1 to 25; the sequence is MAGKMSIVLFVLLVVFLTQNQVSRA.

This sequence belongs to the GASA family. In terms of processing, six disulfide bonds may be present. In terms of tissue distribution, all shoot organs.

It is found in the secreted. The chain is Protein GAST1 (GAST1) from Solanum lycopersicum (Tomato).